The primary structure comprises 140 residues: 3-hydroxyacyl-[acyl-carrier-protein] dehydratase FabZ (140 aa).

Residue histidine 47 is part of the active site.

This sequence belongs to the thioester dehydratase family. FabZ subfamily.

It localises to the cytoplasm. It carries out the reaction a (3R)-hydroxyacyl-[ACP] = a (2E)-enoyl-[ACP] + H2O. In terms of biological role, involved in unsaturated fatty acids biosynthesis. Catalyzes the dehydration of short chain beta-hydroxyacyl-ACPs and long chain saturated and unsaturated beta-hydroxyacyl-ACPs. The sequence is that of 3-hydroxyacyl-[acyl-carrier-protein] dehydratase FabZ from Streptococcus pneumoniae serotype 2 (strain D39 / NCTC 7466).